Here is a 1124-residue protein sequence, read N- to C-terminus: Translation initiation factor IF-2 (1124 aa).

The span at 32 to 41 shows a compositional bias: low complexity; it reads IAAKSHSSSI. Disordered regions lie at residues 32–451 and 480–523; these read IAAK…QKVH and LARP…RAAR. Positions 94 to 104 are enriched in polar residues; the sequence is ATSSSEISQVK. A compositionally biased stretch (low complexity) spans 134-173; it reads VNPTTTPTSSPPKTAARPVNAPISRPATPSRPSAPTPRSA. Over residues 192 to 203 the composition is skewed to polar residues; it reads GQTSTSSKATTV. Positions 214–227 are enriched in low complexity; it reads SRPQSPAAPGRSAP. Basic and acidic residues-rich tracts occupy residues 235–246 and 261–272; these read SDRKAPKPELVG and PEPEGQRPDKKR. 2 stretches are compositionally biased toward low complexity: residues 274 to 283 and 411 to 422; these read GISPRPIGGP and RPAQAPAAGAPR. Over residues 425–439 the composition is skewed to basic and acidic residues; it reads GRPDWDDSAKLEALR. Basic residues-rich tracts occupy residues 484-493 and 500-514; these read AKPKSQKKPA and LRKRKKETTRQRQRR. The tr-type G domain maps to 615–787; sequence RRPPVVTVMG…ILLVTEVEDL (173 aa). The segment at 624–631 is G1; that stretch reads GHVDHGKT. A GTP-binding site is contributed by 624–631; sequence GHVDHGKT. The segment at 649–653 is G2; sequence GITQH. Residues 674-677 form a G3 region; the sequence is DTPG. GTP is bound by residues 674–678 and 728–731; these read DTPGH and NKTD. The interval 728–731 is G4; that stretch reads NKTD. Positions 764 to 766 are G5; the sequence is SAI.

The protein belongs to the TRAFAC class translation factor GTPase superfamily. Classic translation factor GTPase family. IF-2 subfamily.

It is found in the cytoplasm. Functionally, one of the essential components for the initiation of protein synthesis. Protects formylmethionyl-tRNA from spontaneous hydrolysis and promotes its binding to the 30S ribosomal subunits. Also involved in the hydrolysis of GTP during the formation of the 70S ribosomal complex. The sequence is that of Translation initiation factor IF-2 from Prochlorococcus marinus (strain MIT 9303).